The following is a 736-amino-acid chain: DNA topoisomerase 4 subunit A (736 aa).

The Topo IIA-type catalytic domain maps to 32 to 496; sequence LPDVRDGLKP…SFEQVTLTNQ (465 aa). Residue Y120 is the O-(5'-phospho-DNA)-tyrosine intermediate of the active site.

This sequence belongs to the type II topoisomerase GyrA/ParC subunit family. ParC type 1 subfamily. As to quaternary structure, heterotetramer composed of ParC and ParE.

The protein resides in the cell membrane. It catalyses the reaction ATP-dependent breakage, passage and rejoining of double-stranded DNA.. Its function is as follows. Topoisomerase IV is essential for chromosome segregation. It relaxes supercoiled DNA. Performs the decatenation events required during the replication of a circular DNA molecule. The polypeptide is DNA topoisomerase 4 subunit A (Rickettsia bellii (strain RML369-C)).